Consider the following 161-residue polypeptide: UPF0262 protein SPOA0072 (161 aa).

The interval 1–21 (MTMSRISHIELDDSNLPPPTP) is disordered.

The protein belongs to the UPF0262 family.

This chain is UPF0262 protein SPOA0072, found in Ruegeria pomeroyi (strain ATCC 700808 / DSM 15171 / DSS-3) (Silicibacter pomeroyi).